We begin with the raw amino-acid sequence, 170 residues long: Small ribosomal subunit protein mS25 (170 aa).

It belongs to the mitochondrion-specific ribosomal protein mS25 family. As to quaternary structure, component of the mitochondrial ribosome small subunit (28S) which comprises a 12S rRNA and about 30 distinct proteins.

Its subcellular location is the mitochondrion. In Caenorhabditis elegans, this protein is Small ribosomal subunit protein mS25 (mrps-25).